The primary structure comprises 510 residues: MVQDTEVVEAGTSKETETTVDVEKEIQECMGAGKKDLLCNDYSEAVNCFQEACTLLSGKHGQMAEECCEAYYYYGVSLLELARLENGVLGNALKGVPEEDADGDSDQEQEQFEKPDLPETEREKLREEVEAAMATEDEDTQEERGCPRRVEKKKEDDKPKESEKSAEKSDEKEKEEKQAKVESSTVKDVKDEKSSDKPVESSNTEEPGTSGTSASSSKENESEEDPDDISNMQLAWEMLELAKVLYKKHDKSKTNKQMVAQCHLKLGELGLEVENHPQAIGDFLECLVIQKDLLPETDRKLAETYYNLGLAYSFEKRYDNALEHYQSALDVLEARVDMLNELIESNEGNKEKEKEIISECKEVGELKELIPDINSKIEDVILAKKQMQKLDGSPFRQASEGESSSGLGASTSDDKPCSTIPIRKVAPTSVPVAKDSPSDITHLVRRKRPSPDEDNQPAESKENESKKAKQEETEEATNGHSAVKKDTDVTDKNGTNGHSKTPKKDAAKRR.

Residues 95–227 (GVPEEDADGD…KENESEEDPD (133 aa)) form a disordered region. A compositionally biased stretch (acidic residues) spans 98 to 110 (EEDADGDSDQEQE). Composition is skewed to basic and acidic residues over residues 111–129 (QFEKPDLPETEREKLREEV) and 142–199 (EERG…DKPV). Residues 204 to 217 (TEEPGTSGTSASSS) show a composition bias toward low complexity. TPR repeat units lie at residues 260–293 (AQCHLKLGELGLEVENHPQAIGDFLECLVIQKDL) and 302–335 (AETYYNLGLAYSFEKRYDNALEHYQSALDVLEAR). The segment at 391 to 510 (DGSPFRQASE…TPKKDAAKRR (120 aa)) is disordered. The span at 398–411 (ASEGESSSGLGAST) shows a compositional bias: low complexity. 2 short sequence motifs (nuclear localization signal) span residues 444-451 (VRRKRPSP) and 465-471 (SKKAKQE). The segment covering 459 to 471 (ESKENESKKAKQE) has biased composition (basic and acidic residues).

It belongs to the NASP family. As to expression, embryo and larvae.

It localises to the nucleus. In terms of biological role, may function as a nucleosome assembly factor during rapid embryonic cell divisions. The sequence is that of Protein HGV2 (HGV2) from Halocynthia roretzi (Sea squirt).